The following is a 261-amino-acid chain: Proliferating cell nuclear antigen (261 aa).

N6-acetyllysine occurs at positions 14, 77, and 80. Residues 61-80 (RCDRNLAMGVNLTSMSKILK) mediate DNA binding. A disulfide bridge links cysteine 135 with cysteine 162. Lysine 164 participates in a covalent cross-link: Glycyl lysine isopeptide (Lys-Gly) (interchain with G-Cter in SUMO2); alternate. Lysine 164 participates in a covalent cross-link: Glycyl lysine isopeptide (Lys-Gly) (interchain with G-Cter in ubiquitin); alternate. Tyrosine 211 carries the phosphotyrosine; by EGFR modification. Lysine 248 carries the N6-acetyllysine modification. Lysine 254 participates in a covalent cross-link: Glycyl lysine isopeptide (Lys-Gly) (interchain with G-Cter in SUMO2).

The protein belongs to the PCNA family. As to quaternary structure, homotrimer. Interacts with p300/EP300; the interaction occurs on chromatin in UV-irradiated damaged cells. Interacts with CREBBP (via transactivation domain and C-terminus); the interaction occurs on chromatin in UV-irradiated damaged cells. Directly interacts with POLD1, POLD3 and POLD4 subunits of the DNA polymerase delta complex, POLD3 being the major interacting partner; the interaction with POLD3 is inhibited by CDKN1A/p21(CIP1). Forms a complex with activator 1 heteropentamer in the presence of ATP. Interacts with EXO1, POLH, POLK, DNMT1, ERCC5, FEN1, CDC6 and POLDIP2. Interacts with POLB. Interacts with APEX2; this interaction is triggered by reactive oxygen species and increased by misincorporation of uracil in nuclear DNA. Forms a ternary complex with DNTTIP2 and core histone. Interacts with KCTD10. Interacts with PPP1R15A. Interacts with SMARCA5/SNF2H. Interacts with BAZ1B/WSTF; the interaction is direct and is required for BAZ1B/WSTF binding to replication foci during S phase. Interacts with HLTF and SHPRH. Interacts with NUDT15; this interaction is disrupted in response to UV irradiation and acetylation. Interacts with CDKN1A/p21(CIP1) and CDT1; interacts via their PIP-box which also recruits the DCX(DTL) complex. The interaction with CDKN1A inhibits POLD3 binding. Interacts with DDX11. Interacts with EGFR; positively regulates PCNA. Interacts with PARPBP. Interacts (when ubiquitinated) with SPRTN; leading to enhance RAD18-mediated PCNA ubiquitination. Interacts (when polyubiquitinated) with ZRANB3. Interacts with SMARCAD1. Interacts with CDKN1C. Interacts with PCLAF (via PIP-box). Interacts with RTEL1 (via PIP-box); the interaction is direct and essential for the suppression of telomere fragility. Interacts with FAM111A (via PIP-box); the interaction is direct and required for PCNA loading on chromatin binding. Interacts with LIG1. Interacts with SETMAR. Interacts with ANKRD17. Interacts with FBXO18/FBH1 (via PIP-box); the interaction recruits the DCX(DTL) complex and promotes ubiquitination and degradation of FBXO18/FBH1. Interacts with POLN. Interacts with SDE2 (via PIP-box); the interaction is direct and prevents ultraviolet light induced monoubiquitination. Component of the replisome complex composed of at least DONSON, MCM2, MCM7, PCNA and TICRR; interaction at least with PCNA occurs during DNA replication. Interacts with MAPK15; the interaction is chromatin binding dependent and prevents MDM2-mediated PCNA destruction by inhibiting the association of PCNA with MDM2. Interacts with PARP10 (via PIP-box). Interacts with DDI2. Interacts with HMCES (via PIP-box). Interacts with TRAIP (via PIP-box). Interacts with UHRF2. Interacts with ALKBH2; this interaction is enhanced during the S-phase of the cell cycle. Interacts with ATAD5; the interaction promotes USP1-mediated PCNA deubiquitination. Interacts (when phosphorylated) with GRB2. Interacts with ANG. Interacts with nuclear UNG; this interaction mediates UNG recruitment to S-phase replication foci. Interacts with ERCC6L2 (via an atypical PIP-box); this interaction facilitates cenrtomeric localization of ERCC6L2. Phosphorylated. Phosphorylation at Tyr-211 by EGFR stabilizes chromatin-associated PCNA. In terms of processing, acetylated by CREBBP and p300/EP300; preferentially acetylated by CREBBP on Lys-80, Lys-13 and Lys-14 and on Lys-77 by p300/EP300 upon loading on chromatin in response to UV irradiation. Lysine acetylation disrupts association with chromatin, hence promoting PCNA ubiquitination and proteasomal degradation in response to UV damage in a CREBBP- and EP300-dependent manner. Acetylation disrupts interaction with NUDT15 and promotes degradation. Post-translationally, ubiquitinated. Following DNA damage, can be either monoubiquitinated to stimulate direct bypass of DNA lesions by specialized DNA polymerases or polyubiquitinated to promote recombination-dependent DNA synthesis across DNA lesions by template switching mechanisms. Following induction of replication stress, monoubiquitinated by the UBE2B-RAD18 complex on Lys-164, leading to recruit translesion (TLS) polymerases, which are able to synthesize across DNA lesions in a potentially error-prone manner. An error-free pathway also exists and requires non-canonical polyubiquitination on Lys-164 through 'Lys-63' linkage of ubiquitin moieties by the E2 complex UBE2N-UBE2V2 and the E3 ligases, HLTF, RNF8 and SHPRH. This error-free pathway, also known as template switching, employs recombination mechanisms to synthesize across the lesion, using as a template the undamaged, newly synthesized strand of the sister chromatid. Monoubiquitination at Lys-164 also takes place in undamaged proliferating cells, and is mediated by the DCX(DTL) complex, leading to enhance PCNA-dependent translesion DNA synthesis. Sumoylated during S phase. Methylated on glutamate residues by ARMT1.

Its subcellular location is the nucleus. Its function is as follows. Auxiliary protein of DNA polymerase delta and epsilon, is involved in the control of eukaryotic DNA replication by increasing the polymerase's processibility during elongation of the leading strand. Induces a robust stimulatory effect on the 3'-5' exonuclease and 3'-phosphodiesterase, but not apurinic-apyrimidinic (AP) endonuclease, APEX2 activities. Has to be loaded onto DNA in order to be able to stimulate APEX2. Plays a key role in DNA damage response (DDR) by being conveniently positioned at the replication fork to coordinate DNA replication with DNA repair and DNA damage tolerance pathways. Acts as a loading platform to recruit DDR proteins that allow completion of DNA replication after DNA damage and promote postreplication repair: Monoubiquitinated PCNA leads to recruitment of translesion (TLS) polymerases, while 'Lys-63'-linked polyubiquitination of PCNA is involved in error-free pathway and employs recombination mechanisms to synthesize across the lesion. The protein is Proliferating cell nuclear antigen (Pcna) of Mus musculus (Mouse).